Consider the following 379-residue polypeptide: MNLTRDPTGAEIARFIATRTGAQMVELMRCISEPAAQAAFTANLLAAPPVVDARPAASERARKALNAFVRFRCYYVAIPMFKQWPMKKLSNLIGLLWEADPNKSLWSLMTKAWSTIRDQIGKEQAPLDQFFSIICPHLRLPDPALYLEIHGWTLTVDQEGDPTISRSLNSRSSSIGTGNIDIALSVEDIIAYVQSFGYAASFTPTTNVSSPTFLGQSTNLPLENNNPTTAATQAASKIAQARLLARNKRRAKRQTAKETGYRVNLDQDILNAHQISPPPMNRYMPDPYSTFAPTPNHSPNPFYDGLTGFLSEQASIEQVNAATLHNTHSLSDSGLSGDMSYMTMDNFATNMPNLIDYDAFRLGANEDVTLPLFDDIAHA.

A DNA-binding region (alpha box) is located at residues 60–117 (RARKALNAFVRFRCYYVAIPMFKQWPMKKLSNLIGLLWEADPNKSLWSLMTKAWSTIR).

This sequence belongs to the MATALPHA1 family.

The protein resides in the nucleus. Mating type proteins are sequence specific DNA-binding proteins that act as master switches in fungal differentiation by controlling gene expression in a cell type-specific fashion. Transcriptional activator that induces the transcription of alpha-specific genes. This Curvularia kusanoi (Cochliobolus kusanoi) protein is Mating-type protein MAT-1 (MAT1).